The following is a 318-amino-acid chain: C1GALT1-specific chaperone 1 (318 aa).

Residues 1 to 6 (MLSESS) are Cytoplasmic-facing. Residues 7-26 (SFLKGVMLGSIFCALITMLG) traverse the membrane as a helical; Signal-anchor for type II membrane protein segment. The Lumenal segment spans residues 27 to 318 (HIRIGHGNRM…FLPPNGSDND (292 aa)).

This sequence belongs to the glycosyltransferase 31 family. Beta3-Gal-T subfamily. In terms of assembly, associates with core 1 beta-3-galactosyltransferase (C1GALT1), probably not with the soluble active form. As to expression, ubiquitously expressed. Abundantly expressed in salivary gland, stomach, small intestine, kidney, and testis and at intermediate levels in whole brain, cerebellum, spinal cord, thymus, spleen, trachea, lung, pancreas, ovary, and uterus.

Its subcellular location is the membrane. In terms of biological role, probable chaperone required for the generation of 1 O-glycan Gal-beta1-3GalNAc-alpha1-Ser/Thr (T antigen), which is a precursor for many extended O-glycans in glycoproteins. Probably acts as a specific molecular chaperone assisting the folding/stability of core 1 beta-3-galactosyltransferase (C1GALT1). The sequence is that of C1GALT1-specific chaperone 1 (C1GALT1C1) from Homo sapiens (Human).